The following is a 101-amino-acid chain: Large ribosomal subunit protein uL23 (101 aa).

This sequence belongs to the universal ribosomal protein uL23 family. Part of the 50S ribosomal subunit. Contacts protein L29, and trigger factor when it is bound to the ribosome.

Its function is as follows. One of the early assembly proteins it binds 23S rRNA. One of the proteins that surrounds the polypeptide exit tunnel on the outside of the ribosome. Forms the main docking site for trigger factor binding to the ribosome. This is Large ribosomal subunit protein uL23 from Nocardia farcinica (strain IFM 10152).